The following is a 349-amino-acid chain: Phosphoribosylformylglycinamidine cyclo-ligase (349 aa).

This sequence belongs to the AIR synthase family.

It localises to the cytoplasm. The enzyme catalyses 2-formamido-N(1)-(5-O-phospho-beta-D-ribosyl)acetamidine + ATP = 5-amino-1-(5-phospho-beta-D-ribosyl)imidazole + ADP + phosphate + H(+). The protein operates within purine metabolism; IMP biosynthesis via de novo pathway; 5-amino-1-(5-phospho-D-ribosyl)imidazole from N(2)-formyl-N(1)-(5-phospho-D-ribosyl)glycinamide: step 2/2. The polypeptide is Phosphoribosylformylglycinamidine cyclo-ligase (Trichlorobacter lovleyi (strain ATCC BAA-1151 / DSM 17278 / SZ) (Geobacter lovleyi)).